A 476-amino-acid polypeptide reads, in one-letter code: Proline--tRNA ligase 2 (476 aa).

It belongs to the class-II aminoacyl-tRNA synthetase family. ProS type 3 subfamily. Homodimer.

The protein localises to the cytoplasm. The enzyme catalyses tRNA(Pro) + L-proline + ATP = L-prolyl-tRNA(Pro) + AMP + diphosphate. In terms of biological role, catalyzes the attachment of proline to tRNA(Pro) in a two-step reaction: proline is first activated by ATP to form Pro-AMP and then transferred to the acceptor end of tRNA(Pro). This is Proline--tRNA ligase 2 from Bacillus thuringiensis subsp. konkukian (strain 97-27).